A 460-amino-acid polypeptide reads, in one-letter code: Exodeoxyribonuclease 7 large subunit (460 aa).

This sequence belongs to the XseA family. Heterooligomer composed of large and small subunits.

The protein localises to the cytoplasm. The catalysed reaction is Exonucleolytic cleavage in either 5'- to 3'- or 3'- to 5'-direction to yield nucleoside 5'-phosphates.. Bidirectionally degrades single-stranded DNA into large acid-insoluble oligonucleotides, which are then degraded further into small acid-soluble oligonucleotides. The sequence is that of Exodeoxyribonuclease 7 large subunit from Edwardsiella ictaluri (strain 93-146).